Consider the following 254-residue polypeptide: Major prion protein (254 aa).

A signal peptide spans 1 to 22 (MANLGYWLLALFVTMWTDVGLC). The tract at residues 23 to 38 (KKRPKPGGWNTGGSRY) is interaction with ADGRG6. The segment at 23–231 (KKRPKPGGWN…QAYYDGRRSS (209 aa)) is interaction with GRB2, ERI3 and SYN1. The segment at 25-104 (RPKPGGWNTG…HNQWNKPSKP (80 aa)) is disordered. Position 44 is a hydroxyproline (proline 44). Tandem repeats lie at residues 51-58 (PQGGTWGQ), 59-66 (PHGGGWGQ), 67-74 (PHGGSWGQ), 75-82 (PHGGSWGQ), and 83-90 (PHGGGWGQ). Residues 51–90 (PQGGTWGQPHGGGWGQPHGGSWGQPHGGSWGQPHGGGWGQ) are 5 X 8 AA tandem repeats of P-H-G-G-G-W-G-Q. Gly residues predominate over residues 54-94 (GTWGQPHGGGWGQPHGGSWGQPHGGSWGQPHGGGWGQGGGT). Residues histidine 60, glycine 61, glycine 62, histidine 68, glycine 69, glycine 70, histidine 76, glycine 77, glycine 78, histidine 84, glycine 85, and glycine 86 each coordinate Cu(2+). Cysteine 178 and cysteine 213 are joined by a disulfide. Residues asparagine 180 and asparagine 196 are each glycosylated (N-linked (GlcNAc...) asparagine). Serine 230 is lipidated: GPI-anchor amidated serine. A propeptide spans 231-254 (SSTVLFSSPPVILLISFLIFLIVG) (removed in mature form).

It belongs to the prion family. In terms of assembly, monomer and homodimer. Has a tendency to aggregate into amyloid fibrils containing a cross-beta spine, formed by a steric zipper of superposed beta-strands. Soluble oligomers may represent an intermediate stage on the path to fibril formation. Copper binding may promote oligomerization. Interacts with GRB2, APP, ERI3/PRNPIP and SYN1. Mislocalized cytosolically exposed PrP interacts with MGRN1; this interaction alters MGRN1 subcellular location and causes lysosomal enlargement. Interacts with APP. Interacts with KIAA1191. Interacts with ADGRG6. In terms of processing, N-glycosylated. As to expression, highly expressed in the brain, lung, kidney and heart. Expressed at low levels in the liver and spleen.

The protein resides in the cell membrane. Its subcellular location is the golgi apparatus. In terms of biological role, its primary physiological function is unclear. May play a role in neuronal development and synaptic plasticity. May be required for neuronal myelin sheath maintenance. May promote myelin homeostasis through acting as an agonist for ADGRG6 receptor. May play a role in iron uptake and iron homeostasis. Soluble oligomers are toxic to cultured neuroblastoma cells and induce apoptosis (in vitro). Association with GPC1 (via its heparan sulfate chains) targets PRNP to lipid rafts. Also provides Cu(2+) or Zn(2+) for the ascorbate-mediated GPC1 deaminase degradation of its heparan sulfate side chains. The sequence is that of Major prion protein (Prnp) from Mus musculus (Mouse).